A 495-amino-acid chain; its full sequence is UDP-N-acetylmuramoyl-L-alanyl-D-glutamate--2,6-diaminopimelate ligase (495 aa).

Ser-29 contributes to the UDP-N-acetyl-alpha-D-muramoyl-L-alanyl-D-glutamate binding site. 111–117 (GTNGKTS) contacts ATP. Residues 153 to 154 (TT), Ser-180, Gln-186, and Arg-188 each bind UDP-N-acetyl-alpha-D-muramoyl-L-alanyl-D-glutamate. The residue at position 220 (Lys-220) is an N6-carboxylysine. Meso-2,6-diaminopimelate-binding positions include Arg-384, 408–411 (DNPR), Gly-459, and Glu-463. Positions 408 to 411 (DNPR) match the Meso-diaminopimelate recognition motif motif.

Belongs to the MurCDEF family. MurE subfamily. Mg(2+) serves as cofactor. In terms of processing, carboxylation is probably crucial for Mg(2+) binding and, consequently, for the gamma-phosphate positioning of ATP.

Its subcellular location is the cytoplasm. The enzyme catalyses UDP-N-acetyl-alpha-D-muramoyl-L-alanyl-D-glutamate + meso-2,6-diaminopimelate + ATP = UDP-N-acetyl-alpha-D-muramoyl-L-alanyl-gamma-D-glutamyl-meso-2,6-diaminopimelate + ADP + phosphate + H(+). It functions in the pathway cell wall biogenesis; peptidoglycan biosynthesis. Catalyzes the addition of meso-diaminopimelic acid to the nucleotide precursor UDP-N-acetylmuramoyl-L-alanyl-D-glutamate (UMAG) in the biosynthesis of bacterial cell-wall peptidoglycan. The chain is UDP-N-acetylmuramoyl-L-alanyl-D-glutamate--2,6-diaminopimelate ligase from Xanthomonas campestris pv. campestris (strain 8004).